The chain runs to 352 residues: Alanine racemase (352 aa).

K33 acts as the Proton acceptor; specific for D-alanine in catalysis. K33 carries the post-translational modification N6-(pyridoxal phosphate)lysine. R129 contributes to the substrate binding site. Y250 functions as the Proton acceptor; specific for L-alanine in the catalytic mechanism. M298 contacts substrate.

It belongs to the alanine racemase family. The cofactor is pyridoxal 5'-phosphate.

It carries out the reaction L-alanine = D-alanine. Its pathway is amino-acid biosynthesis; D-alanine biosynthesis; D-alanine from L-alanine: step 1/1. In terms of biological role, catalyzes the interconversion of L-alanine and D-alanine. May also act on other amino acids. The chain is Alanine racemase (alr) from Neisseria meningitidis serogroup A / serotype 4A (strain DSM 15465 / Z2491).